Here is a 314-residue protein sequence, read N- to C-terminus: Probable cell division protein WhiA (314 aa).

The H-T-H motif DNA-binding region spans 275-309 (SLKELGELVTSGAISKSGVNHRLKKIDEFAEKIKR).

Belongs to the WhiA family.

Its function is as follows. Involved in cell division and chromosome segregation. The sequence is that of Probable cell division protein WhiA from Oceanobacillus iheyensis (strain DSM 14371 / CIP 107618 / JCM 11309 / KCTC 3954 / HTE831).